Consider the following 90-residue polypeptide: Putative defensin-like protein 64 (90 aa).

Residues 1 to 23 (MWGRQIVLKIFFLVLSCVIVIET) form the signal peptide. 2 disulfides stabilise this stretch: Cys-33–Cys-56 and Cys-42–Cys-77.

Belongs to the DEFL family.

Its subcellular location is the secreted. The protein is Putative defensin-like protein 64 of Arabidopsis thaliana (Mouse-ear cress).